The chain runs to 59 residues: uncharacterized protein (59 aa).

The disordered stretch occupies residues 27-59; it reads SCFQNRPPEPASFQNLRPEPASLQNLRTEPTSF. A compositionally biased stretch (polar residues) spans 48-59; it reads SLQNLRTEPTSF.

This is an uncharacterized protein from Homo sapiens (Human).